The sequence spans 353 residues: Ribosomal RNA small subunit methyltransferase H (353 aa).

S-adenosyl-L-methionine-binding positions include 50–52 (GGY), aspartate 69, phenylalanine 96, aspartate 117, and glutamine 124. Residues 276 to 353 (AAQASRHVPG…PAPQGRGPRR (78 aa)) are disordered.

It belongs to the methyltransferase superfamily. RsmH family.

It localises to the cytoplasm. The enzyme catalyses cytidine(1402) in 16S rRNA + S-adenosyl-L-methionine = N(4)-methylcytidine(1402) in 16S rRNA + S-adenosyl-L-homocysteine + H(+). Functionally, specifically methylates the N4 position of cytidine in position 1402 (C1402) of 16S rRNA. The polypeptide is Ribosomal RNA small subunit methyltransferase H (Methylorubrum extorquens (strain CM4 / NCIMB 13688) (Methylobacterium extorquens)).